The sequence spans 637 residues: Pyrethroid hydrolase (637 aa).

The enzyme catalyses (-)-trans-permethrin + H2O = (3-phenoxyphenyl)methanol + (1S,3R)-3-(2,2-dichlorovinyl)-2,2-dimethylcyclopropanecarboxylate + H(+). Inhibited by Hg(2+), Ag(+) and rho-chloromercuribenzoate. Functionally, catalyzes the hydrolysis of pyrethroids pesticides. Hydrolyzes cis-permethrin at approximately equal rate to trans-permethrin. The sequence is that of Pyrethroid hydrolase (estP) from Klebsiella sp.